Here is a 296-residue protein sequence, read N- to C-terminus: Ribosomal protein L11 methyltransferase (296 aa).

S-adenosyl-L-methionine contacts are provided by threonine 151, glycine 172, aspartate 194, and asparagine 233.

This sequence belongs to the methyltransferase superfamily. PrmA family.

Its subcellular location is the cytoplasm. The enzyme catalyses L-lysyl-[protein] + 3 S-adenosyl-L-methionine = N(6),N(6),N(6)-trimethyl-L-lysyl-[protein] + 3 S-adenosyl-L-homocysteine + 3 H(+). In terms of biological role, methylates ribosomal protein L11. In Dechloromonas aromatica (strain RCB), this protein is Ribosomal protein L11 methyltransferase.